The chain runs to 180 residues: Putative manganese efflux pump MntP (180 aa).

6 helical membrane-spanning segments follow: residues 4 to 24 (FVTI…VALG), 40 to 60 (LTIG…GKWL), 64 to 84 (FDVI…VQMA), 103 to 123 (LLLF…SFGI), 129 to 149 (FVTV…GLIV), and 156 to 176 (FLGA…GLKI).

Belongs to the MntP (TC 9.B.29) family.

Its subcellular location is the cell membrane. Functionally, probably functions as a manganese efflux pump. The chain is Putative manganese efflux pump MntP from Shouchella clausii (strain KSM-K16) (Alkalihalobacillus clausii).